The sequence spans 723 residues: Catalase-peroxidase (723 aa).

Positions Trp98–Tyr226 form a cross-link, tryptophyl-tyrosyl-methioninium (Trp-Tyr) (with M-252). Residue His99 is the Proton acceptor of the active site. The tryptophyl-tyrosyl-methioninium (Tyr-Met) (with W-98) cross-link spans Tyr226–Met252. His267 is a binding site for heme b. The tract at residues His267–Glu286 is disordered.

The protein belongs to the peroxidase family. Peroxidase/catalase subfamily. In terms of assembly, homodimer or homotetramer. The cofactor is heme b. Post-translationally, formation of the three residue Trp-Tyr-Met cross-link is important for the catalase, but not the peroxidase activity of the enzyme.

The catalysed reaction is H2O2 + AH2 = A + 2 H2O. The enzyme catalyses 2 H2O2 = O2 + 2 H2O. In terms of biological role, bifunctional enzyme with both catalase and broad-spectrum peroxidase activity. This is Catalase-peroxidase from Thioalkalivibrio sulfidiphilus (strain HL-EbGR7).